The following is a 311-amino-acid chain: MSVKVKDLLQKVRLQLIYGSEDLLEKEITTSDISRPGLEMTGYFDYYTPERIQLIGMKEWSYLMKMTSHNRHQVLLKMFQPTTPVVIIARDLEIPDEMMQAAQEKQIVILRSHTSTSRLSGEISSYLDSRLAERTSIHGVLMDIYGMGVLIQGDSGIGKSETGLELVKRGHRLVADDRVDIFAKDEMTLWGEPAEILRHLLEIRGVGIIDVMSLYGASAVKDSSQVQIAVYLENYDVNKTFDRLGNASDELEIAGVRIPRVRIPVKTGRNISVVIEAAAMNYRAKEMGFDATKIFEERLTNLISQNEVKHD.

Active-site residues include H138 and K159. ATP is bound at residue 153–160 (GDSGIGKS). S160 is a Mg(2+) binding site. D177 acts as the Proton acceptor; for phosphorylation activity. Proton donor; for dephosphorylation activity in catalysis. Residues 201 to 210 (LEIRGVGIID) form an important for the catalytic mechanism of both phosphorylation and dephosphorylation region. Position 202 (E202) interacts with Mg(2+). The active site involves R243. The tract at residues 264–269 (PVKTGR) is important for the catalytic mechanism of dephosphorylation.

Belongs to the HPrK/P family. In terms of assembly, homohexamer. Mg(2+) is required as a cofactor.

It carries out the reaction [HPr protein]-L-serine + ATP = [HPr protein]-O-phospho-L-serine + ADP + H(+). It catalyses the reaction [HPr protein]-O-phospho-L-serine + phosphate + H(+) = [HPr protein]-L-serine + diphosphate. In terms of biological role, catalyzes the ATP- as well as the pyrophosphate-dependent phosphorylation of a specific serine residue in HPr, a phosphocarrier protein of the phosphoenolpyruvate-dependent sugar phosphotransferase system (PTS). HprK/P also catalyzes the pyrophosphate-producing, inorganic phosphate-dependent dephosphorylation (phosphorolysis) of seryl-phosphorylated HPr (P-Ser-HPr). The two antagonistic activities of HprK/P are regulated by several intracellular metabolites, which change their concentration in response to the absence or presence of rapidly metabolisable carbon sources (glucose, fructose, etc.) in the growth medium. Therefore, by controlling the phosphorylation state of HPr, HPrK/P is a sensor enzyme that plays a major role in the regulation of carbon metabolism and sugar transport: it mediates carbon catabolite repression (CCR), and regulates PTS-catalyzed carbohydrate uptake and inducer exclusion. This Streptococcus gordonii (strain Challis / ATCC 35105 / BCRC 15272 / CH1 / DL1 / V288) protein is HPr kinase/phosphorylase.